Here is a 431-residue protein sequence, read N- to C-terminus: MANSC domain-containing protein 1 (431 aa).

The N-terminal stretch at 1–26 (MFFGGEGSLTYTLVIICFLTLRLSAS) is a signal peptide. The Extracellular portion of the chain corresponds to 27-385 (QNCLKKSLED…QYGLPFEKWL (359 aa)). Residues 33–117 (SLEDVVIDIQ…LKPAKGLMSY (85 aa)) form the MANSC domain. N72, N222, and N251 each carry an N-linked (GlcNAc...) asparagine glycan. The interval 234–277 (SPHTTSATPKPATLLPTNASVTPSGTSQPQLATTAPPVTTVTSQ) is disordered. A compositionally biased stretch (polar residues) spans 248–261 (LPTNASVTPSGTSQ). Over residues 262 to 277 (PQLATTAPPVTTVTSQ) the composition is skewed to low complexity. N327 and N352 each carry an N-linked (GlcNAc...) asparagine glycan. The disordered stretch occupies residues 352-372 (NKTASWEGREASPGSSSQGSV). A helical membrane pass occupies residues 386–408 (LIGSLLFGVLFLVIGLVLLGRIL). The Cytoplasmic portion of the chain corresponds to 409–431 (SESLRRKRYSRLDYLINGIYVDI).

In terms of tissue distribution, widely expressed.

The protein localises to the membrane. This Homo sapiens (Human) protein is MANSC domain-containing protein 1 (MANSC1).